We begin with the raw amino-acid sequence, 379 residues long: Sperm microtubule associated protein 2 (379 aa).

The interval 1–82 (MGDSRRRSLG…EFPETLDPKE (82 aa)) is disordered. 2 stretches are compositionally biased toward basic and acidic residues: residues 19–29 (GRSEREQDGDP) and 38–50 (ESRR…RQDL). A compositionally biased stretch (acidic residues) spans 56 to 76 (GPEDPEEELPPEEVAGEEFPE). THEG repeat units lie at residues 118-137 (KARK…PKIN), 184-203 (TITV…PKRF), 222-241 (SSLE…PKIR), 258-277 (AAQM…PKAP), 290-309 (PKPH…PKAQ), and 326-345 (VTKK…PKVR). Ser-295 is modified (phosphoserine). The interval 344-379 (VRKGLNEGYDRRPLASMSLPPPKASPEKCDQPRPGL) is disordered. Composition is skewed to basic and acidic residues over residues 347-356 (GLNEGYDRRP) and 368-379 (SPEKCDQPRPGL).

As to quaternary structure, interacts with CCT5. In terms of tissue distribution, testis specific.

It is found in the nucleus. Its function is as follows. May be involved (but not essential) in spermatogenesis. The chain is Sperm microtubule associated protein 2 from Homo sapiens (Human).